The primary structure comprises 40 residues: Photosystem II reaction center protein Psb30 (40 aa).

Residues 12–32 traverse the membrane as a helical segment; that stretch reads VIFQLTSVALIIIAGPAVIFV.

Belongs to the Psb30/Ycf12 family. As to quaternary structure, PSII is composed of 1 copy each of membrane proteins PsbA, PsbB, PsbC, PsbD, PsbE, PsbF, PsbH, PsbI, PsbJ, PsbK, PsbL, PsbM, PsbT, PsbX, PsbY, PsbZ, Psb30/Ycf12, peripheral proteins PsbO, CyanoQ (PsbQ), PsbU, PsbV and a large number of cofactors. It forms dimeric complexes.

The protein localises to the cellular thylakoid membrane. In terms of biological role, a core subunit of photosystem II (PSII), probably helps stabilize the reaction center. The polypeptide is Photosystem II reaction center protein Psb30 (Nostoc sp. (strain PCC 7120 / SAG 25.82 / UTEX 2576)).